Reading from the N-terminus, the 286-residue chain is 2-hydroxy-6-oxononadienedioate/2-hydroxy-6-oxononatrienedioate hydrolase 2 (286 aa).

His-266 acts as the Proton acceptor in catalysis.

It belongs to the AB hydrolase superfamily. MhpC family. Homodimer.

The enzyme catalyses (2Z,4E)-2-hydroxy-6-oxonona-2,4-dienedioate + H2O = (2Z)-2-hydroxypenta-2,4-dienoate + succinate + H(+). It catalyses the reaction (2Z,4E,7E)-2-hydroxy-6-oxonona-2,4,7-trienedioate + H2O = (2Z)-2-hydroxypenta-2,4-dienoate + fumarate + H(+). Its pathway is aromatic compound metabolism; 3-phenylpropanoate degradation. Functionally, catalyzes the cleavage of the C5-C6 bond of 2-hydroxy-6-oxononadienedioate and 2-hydroxy-6-oxononatrienedioate, a dienol ring fission product of the bacterial meta-cleavage pathway for degradation of phenylpropionic acid. The chain is 2-hydroxy-6-oxononadienedioate/2-hydroxy-6-oxononatrienedioate hydrolase 2 from Pseudomonas putida (Arthrobacter siderocapsulatus).